Consider the following 254-residue polypeptide: Acetyl-coenzyme A carboxylase carboxyl transferase subunit beta (254 aa).

The CoA carboxyltransferase N-terminal domain maps to 1-254; sequence MWLRCPHCHQ…LLKTGSVANE (254 aa). Residues Cys5, Cys8, Cys23, and Cys26 each coordinate Zn(2+). The C4-type zinc-finger motif lies at 5–26; it reads CPHCHQLLFAKQLTQYAVCPNC.

The protein belongs to the AccD/PCCB family. As to quaternary structure, acetyl-CoA carboxylase is a heterohexamer composed of biotin carboxyl carrier protein (AccB), biotin carboxylase (AccC) and two subunits each of ACCase subunit alpha (AccA) and ACCase subunit beta (AccD). Zn(2+) serves as cofactor.

Its subcellular location is the cytoplasm. The catalysed reaction is N(6)-carboxybiotinyl-L-lysyl-[protein] + acetyl-CoA = N(6)-biotinyl-L-lysyl-[protein] + malonyl-CoA. Its pathway is lipid metabolism; malonyl-CoA biosynthesis; malonyl-CoA from acetyl-CoA: step 1/1. Its function is as follows. Component of the acetyl coenzyme A carboxylase (ACC) complex. Biotin carboxylase (BC) catalyzes the carboxylation of biotin on its carrier protein (BCCP) and then the CO(2) group is transferred by the transcarboxylase to acetyl-CoA to form malonyl-CoA. This Limosilactobacillus reuteri (strain DSM 20016) (Lactobacillus reuteri) protein is Acetyl-coenzyme A carboxylase carboxyl transferase subunit beta.